The primary structure comprises 258 residues: Methanol--corrinoid protein (258 aa).

The B12-binding N-terminal domain maps to 30-124 (AEELYPKDEL…NSGATPKTKG (95 aa)). In terms of domain architecture, B12-binding spans 123-248 (KGTVVCHVAE…DAIIAGTTDV (126 aa)). H136 is a binding site for methylcob(III)alamin.

The protein belongs to the methylamine corrinoid protein family. In terms of assembly, heterotetramer, composed of 2 MtaB and 2 MtaC subunits.

Harbors a corrinoid prosthetic group and acts as a methyl group carrier in methanogenesis in the methanol pathway. The methyl group of methanol is first transferred to the corrinoid prosthetic group of MtaC in the cob(I)amide oxidation state. This reaction is mediated by MtaB. The methyl group from MtaC is then transferred to coenzyme M by MtaA. The polypeptide is Methanol--corrinoid protein (mtaC) (Methanosarcina barkeri (strain Fusaro / DSM 804)).